We begin with the raw amino-acid sequence, 70 residues long: MTTIILNPNEPVEVALRRFRRSIEKTGLIKELRARTSYEKPTTERKRKKAAAVARLRKQVRRSMPPKKKY.

The segment at 38-70 (YEKPTTERKRKKAAAVARLRKQVRRSMPPKKKY) is disordered. A compositionally biased stretch (basic residues) spans 45–70 (RKRKKAAAVARLRKQVRRSMPPKKKY).

Belongs to the bacterial ribosomal protein bS21 family.

The protein is Small ribosomal subunit protein bS21C of Burkholderia thailandensis (strain ATCC 700388 / DSM 13276 / CCUG 48851 / CIP 106301 / E264).